The chain runs to 187 residues: Putative manganese efflux pump MntP (187 aa).

6 consecutive transmembrane segments (helical) span residues 3 to 23, 39 to 59, 65 to 85, 106 to 126, 129 to 149, and 166 to 186; these read YYTLWVIAFGLSMDAFAVSVG, IALCFGLFQACMPLLGYYVGS, ISEFDHWIAFALLCVIGINMI, LTMLGVATSIDALAMGVSFAF, VNIWTAAAIIGITTTILSLFG, and LLGGIILIAMGVKVLIEHRVF.

It belongs to the MntP (TC 9.B.29) family.

It is found in the cell inner membrane. In terms of biological role, probably functions as a manganese efflux pump. This Actinobacillus succinogenes (strain ATCC 55618 / DSM 22257 / CCUG 43843 / 130Z) protein is Putative manganese efflux pump MntP.